Here is a 348-residue protein sequence, read N- to C-terminus: tRNA N6-adenosine threonylcarbamoyltransferase (348 aa).

2 residues coordinate Fe cation: His111 and His115. Substrate-binding positions include 134 to 138 (LVSGG), Asp167, Gly180, Asp184, and Asn279. Asp307 contacts Fe cation.

Belongs to the KAE1 / TsaD family. It depends on Fe(2+) as a cofactor.

The protein resides in the cytoplasm. It catalyses the reaction L-threonylcarbamoyladenylate + adenosine(37) in tRNA = N(6)-L-threonylcarbamoyladenosine(37) in tRNA + AMP + H(+). Functionally, required for the formation of a threonylcarbamoyl group on adenosine at position 37 (t(6)A37) in tRNAs that read codons beginning with adenine. Is involved in the transfer of the threonylcarbamoyl moiety of threonylcarbamoyl-AMP (TC-AMP) to the N6 group of A37, together with TsaE and TsaB. TsaD likely plays a direct catalytic role in this reaction. The chain is tRNA N6-adenosine threonylcarbamoyltransferase from Synechocystis sp. (strain ATCC 27184 / PCC 6803 / Kazusa).